The following is a 364-amino-acid chain: Pectinesterase (364 aa).

An N-terminal signal peptide occupies residues 1–22 (MSCIAVEAVLLGILLYIPIVLS). A glycan (N-linked (GlcNAc...) asparagine) is linked at N103. D220 is an active-site residue.

The protein resides in the secreted. The catalysed reaction is [(1-&gt;4)-alpha-D-galacturonosyl methyl ester](n) + n H2O = [(1-&gt;4)-alpha-D-galacturonosyl](n) + n methanol + n H(+). The protein operates within glycan metabolism; pectin degradation; 2-dehydro-3-deoxy-D-gluconate from pectin: step 1/5. Functionally, catalyzes the demethylesterification of homogalacturonan components of pectin. The chain is Pectinesterase from Parthenium hysterophorus (Santa Maria feverfew).